The following is a 364-amino-acid chain: Spermidine/putrescine import ATP-binding protein PotA (364 aa).

An ABC transporter domain is found at 6 to 236 (IEIRQIYKSY…PANLHVAMFI (231 aa)). An ATP-binding site is contributed by 38-45 (GPSGCGKT).

Belongs to the ABC transporter superfamily. Spermidine/putrescine importer (TC 3.A.1.11.1) family. As to quaternary structure, the complex is composed of two ATP-binding proteins (PotA), two transmembrane proteins (PotB and PotC) and a solute-binding protein (PotD).

It localises to the cell inner membrane. It catalyses the reaction ATP + H2O + polyamine-[polyamine-binding protein]Side 1 = ADP + phosphate + polyamineSide 2 + [polyamine-binding protein]Side 1.. Part of the ABC transporter complex PotABCD involved in spermidine/putrescine import. Responsible for energy coupling to the transport system. The chain is Spermidine/putrescine import ATP-binding protein PotA from Legionella pneumophila subsp. pneumophila (strain Philadelphia 1 / ATCC 33152 / DSM 7513).